We begin with the raw amino-acid sequence, 245 residues long: tRNA (guanine-N(1)-)-methyltransferase (245 aa).

Residues Gly113 and 133 to 138 (IGDYVL) each bind S-adenosyl-L-methionine.

This sequence belongs to the RNA methyltransferase TrmD family. In terms of assembly, homodimer.

It is found in the cytoplasm. It catalyses the reaction guanosine(37) in tRNA + S-adenosyl-L-methionine = N(1)-methylguanosine(37) in tRNA + S-adenosyl-L-homocysteine + H(+). Its function is as follows. Specifically methylates guanosine-37 in various tRNAs. The polypeptide is tRNA (guanine-N(1)-)-methyltransferase (Oceanobacillus iheyensis (strain DSM 14371 / CIP 107618 / JCM 11309 / KCTC 3954 / HTE831)).